The following is a 415-amino-acid chain: Phosphoribosylamine--glycine ligase (415 aa).

In terms of domain architecture, ATP-grasp spans 108–311 (KKIMKKYNIP…LMQHIIDLDE (204 aa)). An ATP-binding site is contributed by 134 to 191 (IENCELPVVVKKDGLAAGKGVIIADTIEAARSAIEIMYGDEEEGTVVFETFLEGEEFS). 2 residues coordinate Mg(2+): glutamate 281 and asparagine 283.

This sequence belongs to the GARS family. Requires Mg(2+) as cofactor. It depends on Mn(2+) as a cofactor.

The catalysed reaction is 5-phospho-beta-D-ribosylamine + glycine + ATP = N(1)-(5-phospho-beta-D-ribosyl)glycinamide + ADP + phosphate + H(+). It participates in purine metabolism; IMP biosynthesis via de novo pathway; N(1)-(5-phospho-D-ribosyl)glycinamide from 5-phospho-alpha-D-ribose 1-diphosphate: step 2/2. This is Phosphoribosylamine--glycine ligase from Staphylococcus aureus (strain Mu50 / ATCC 700699).